The chain runs to 505 residues: Exodeoxyribonuclease 7 large subunit (505 aa).

Positions 466–505 are disordered; it reads SGDRDAVIDGEGGPAPAPTAPAPKPRPKPAAPPAGQGDLF. Over residues 480 to 497 the composition is skewed to pro residues; the sequence is APAPTAPAPKPRPKPAAP.

The protein belongs to the XseA family. In terms of assembly, heterooligomer composed of large and small subunits.

Its subcellular location is the cytoplasm. The catalysed reaction is Exonucleolytic cleavage in either 5'- to 3'- or 3'- to 5'-direction to yield nucleoside 5'-phosphates.. Functionally, bidirectionally degrades single-stranded DNA into large acid-insoluble oligonucleotides, which are then degraded further into small acid-soluble oligonucleotides. This chain is Exodeoxyribonuclease 7 large subunit, found in Caulobacter vibrioides (strain NA1000 / CB15N) (Caulobacter crescentus).